Here is a 51-residue protein sequence, read N- to C-terminus: Large ribosomal subunit protein eL39 (51 aa).

The span at 1–15 shows a compositional bias: basic residues; sequence MPSHKSFRTKQKLAK. A disordered region spans residues 1–21; it reads MPSHKSFRTKQKLAKAARQNR.

It belongs to the eukaryotic ribosomal protein eL39 family. In terms of assembly, component of the large ribosomal subunit (LSU). Mature yeast ribosomes consist of a small (40S) and a large (60S) subunit. The 40S small subunit contains 1 molecule of ribosomal RNA (18S rRNA) and at least 33 different proteins. The large 60S subunit contains 3 rRNA molecules (25S, 5.8S and 5S rRNA) and at least 46 different proteins. eL39 interacts with yih1.

The protein localises to the cytoplasm. Functionally, component of the ribosome, a large ribonucleoprotein complex responsible for the synthesis of proteins in the cell. The small ribosomal subunit (SSU) binds messenger RNAs (mRNAs) and translates the encoded message by selecting cognate aminoacyl-transfer RNA (tRNA) molecules. The large subunit (LSU) contains the ribosomal catalytic site termed the peptidyl transferase center (PTC), which catalyzes the formation of peptide bonds, thereby polymerizing the amino acids delivered by tRNAs into a polypeptide chain. The nascent polypeptides leave the ribosome through a tunnel in the LSU and interact with protein factors that function in enzymatic processing, targeting, and the membrane insertion of nascent chains at the exit of the ribosomal tunnel. This Schizosaccharomyces pombe (strain 972 / ATCC 24843) (Fission yeast) protein is Large ribosomal subunit protein eL39 (rpl39).